A 172-amino-acid polypeptide reads, in one-letter code: Large ribosomal subunit protein uL22y (172 aa).

It belongs to the universal ribosomal protein uL22 family.

The polypeptide is Large ribosomal subunit protein uL22y (Hordeum vulgare (Barley)).